Reading from the N-terminus, the 483-residue chain is ATP-dependent protease ATPase subunit HslU (483 aa).

ATP is bound by residues valine 18 and 60-65; that span reads GVGKTE. Composition is skewed to low complexity over residues 136-147 and 171-181; these read LPGGAPQPAPAQ and AQADASQASPP. Positions 136 to 212 are disordered; the sequence is LPGGAPQPAP…HGGKLDDREV (77 aa). The segment covering 182 to 191 has biased composition (polar residues); it reads TGTGSAPDSR. Positions 192–209 are enriched in basic and acidic residues; that stretch reads SSTREKLRTLWHGGKLDD. ATP-binding residues include aspartate 296, glutamate 361, and arginine 433.

This sequence belongs to the ClpX chaperone family. HslU subfamily. A double ring-shaped homohexamer of HslV is capped on each side by a ring-shaped HslU homohexamer. The assembly of the HslU/HslV complex is dependent on binding of ATP.

Its subcellular location is the cytoplasm. Its function is as follows. ATPase subunit of a proteasome-like degradation complex; this subunit has chaperone activity. The binding of ATP and its subsequent hydrolysis by HslU are essential for unfolding of protein substrates subsequently hydrolyzed by HslV. HslU recognizes the N-terminal part of its protein substrates and unfolds these before they are guided to HslV for hydrolysis. The polypeptide is ATP-dependent protease ATPase subunit HslU (Nitratidesulfovibrio vulgaris (strain DSM 19637 / Miyazaki F) (Desulfovibrio vulgaris)).